Reading from the N-terminus, the 483-residue chain is Coagulation factor X isoform 1 (483 aa).

The N-terminal stretch at 1–20 (MAPQLLLCLILTFLWSLPEA) is a signal peptide. Positions 21 to 40 (ESNVFLKSKVANRFLQRTKR) are excised as a propeptide. Positions 41–86 (ANSLFEEFKSGNIERECIEERCSKEEAREAFEDDEKTETFWNVYVD) constitute a Gla domain. 4-carboxyglutamate occurs at positions 46, 47, 54, 56, 59, 60, 65, 66, 69, 72, and 75. A disulfide bridge connects residues Cys-57 and Cys-62. Residues 86 to 122 (DGDQCSSNPCHYGGTCKDGIGSYTCTCLSGYEGKNCE) form the EGF-like 1; calcium-binding domain. Disulfide bonds link Cys-90/Cys-101, Cys-95/Cys-110, Cys-112/Cys-121, Cys-129/Cys-140, Cys-136/Cys-149, Cys-151/Cys-164, Cys-172/Cys-345, Cys-245/Cys-250, Cys-265/Cys-281, Cys-393/Cys-407, and Cys-418/Cys-446. An O-linked (Hex...) serine glycan is attached at Ser-92. Position 103 is a (3R)-3-hydroxyaspartate (Asp-103). Residues 125 to 165 (LYKSCRVDNGDCWHFCKPVQNGIQCSCAESYLLGEDGHSCV) form the EGF-like 2 domain. Positions 183-238 (EANLPDFQTDFSDDYDEIDENNFVETPTNFSGLVLTVQSQNATLLKKSDNPSPDIR) are cleaved as a propeptide — activation peptide. One can recognise a Peptidase S1 domain in the interval 239 to 470 (VVNGTDCKLG…FILWIKRIIR (232 aa)). His-280 serves as the catalytic Charge relay system. N-linked (GlcNAc...) asparagine glycosylation occurs at Asn-283. Asp-325 (charge relay system) is an active-site residue. The active-site Charge relay system is the Ser-422.

The protein belongs to the peptidase S1 family. As to quaternary structure, heterodimer of a light chain and a heavy chain; disulfide-linked. Gamma-carboxyglutamate residues are formed by vitamin K dependent carboxylation. These residues are essential for the binding of calcium. Post-translationally, the activation peptide is cleaved by factor IXa (in the intrinsic pathway), or by factor VIIa (in the extrinsic pathway). In terms of processing, the iron and 2-oxoglutarate dependent 3-hydroxylation of aspartate and asparagine is (R) stereospecific within EGF domains. Plasma; synthesized in the liver.

Its subcellular location is the secreted. It catalyses the reaction Selective cleavage of Arg-|-Thr and then Arg-|-Ile bonds in prothrombin to form thrombin.. In terms of biological role, factor Xa is a vitamin K-dependent glycoprotein that converts prothrombin to thrombin in the presence of factor Va, calcium and phospholipid during blood clotting. This is Coagulation factor X isoform 1 (F10) from Pseudonaja textilis (Eastern brown snake).